Consider the following 146-residue polypeptide: Large ribosomal subunit protein uL15 (146 aa).

The interval 1–62 is disordered; that stretch reads MRLHELRPKT…GQMPLQERLP (62 aa). The segment covering 10-21 has biased composition (basic residues); sequence TNYKKSRKRKGR. The segment covering 42 to 52 has biased composition (gly residues); the sequence is TGGGVRPGFEG.

Belongs to the universal ribosomal protein uL15 family. As to quaternary structure, part of the 50S ribosomal subunit.

Its function is as follows. Binds to the 23S rRNA. The sequence is that of Large ribosomal subunit protein uL15 from Natranaerobius thermophilus (strain ATCC BAA-1301 / DSM 18059 / JW/NM-WN-LF).